The chain runs to 433 residues: Legumain (433 aa).

A signal peptide spans Met-1–Ala-17. The N-linked (GlcNAc...) asparagine glycan is linked to Asn-91. The active site involves His-148. Residue Asn-167 is glycosylated (N-linked (GlcNAc...) asparagine). Cys-189 acts as the Nucleophile in catalysis. N-linked (GlcNAc...) asparagine glycans are attached at residues Asn-263 and Asn-272. Positions Asp-324 to Tyr-433 are excised as a propeptide. Cystine bridges form between Cys-378–Cys-412 and Cys-390–Cys-429.

It belongs to the peptidase C13 family. Homodimer before autocatalytic removal of the propeptide. Monomer after autocatalytic processing. May interact with integrins. Activated by autocatalytic processing at pH 4.

Its subcellular location is the lysosome. The catalysed reaction is Hydrolysis of proteins and small molecule substrates at -Asn-|-Xaa- bonds.. Has a strict specificity for hydrolysis of asparaginyl bonds. Can also cleave aspartyl bonds slowly, especially under acidic conditions. Involved in the processing of proteins for MHC class II antigen presentation in the lysosomal/endosomal system. Also involved in MHC class I antigen presentation in cross-presenting dendritic cells by mediating cleavage and maturation of Perforin-2 (MPEG1), thereby promoting antigen translocation in the cytosol. Required for normal lysosomal protein degradation in renal proximal tubules. Required for normal degradation of internalized EGFR. Plays a role in the regulation of cell proliferation via its role in EGFR degradation. The sequence is that of Legumain (LGMN) from Pongo abelii (Sumatran orangutan).